We begin with the raw amino-acid sequence, 372 residues long: Cytochrome b (372 aa).

4 helical membrane passes run 25-45, 69-90, 105-125, and 170-190; these read FGSMLLTCLMLQITTGFFLAI, WIMQNLHAISASMFFICIYIHI, WLSGTALLITLMATAFFGYVL, and FFALHFILPFAIMALSSIHII. The heme b site is built by histidine 75 and histidine 89. 2 residues coordinate heme b: histidine 174 and histidine 188. Residue histidine 193 coordinates a ubiquinone. 4 helical membrane-spanning segments follow: residues 218 to 238, 280 to 300, 312 to 332, and 339 to 358; these read YKDMLMFTSMITLLFITLSFS, LGGALALLMSVMILTTVPFTH, LSQILFWTLMATFITITWTAS, and FISISQTTSIFYFSFFITIP.

Belongs to the cytochrome b family. In terms of assembly, the cytochrome bc1 complex contains 3 respiratory subunits (MT-CYB, CYC1 and UQCRFS1), 2 core proteins (UQCRC1 and UQCRC2) and probably 6 low-molecular weight proteins. It depends on heme b as a cofactor.

Its subcellular location is the mitochondrion inner membrane. Its function is as follows. Component of the ubiquinol-cytochrome c reductase complex (complex III or cytochrome b-c1 complex) that is part of the mitochondrial respiratory chain. The b-c1 complex mediates electron transfer from ubiquinol to cytochrome c. Contributes to the generation of a proton gradient across the mitochondrial membrane that is then used for ATP synthesis. The polypeptide is Cytochrome b (MT-CYB) (Naja annulata annulata (Banded water cobra)).